Consider the following 62-residue polypeptide: DNA-binding protein 7b (62 aa).

The protein belongs to the 7 kDa DNA-binding/endoribonuclease P2 family. In terms of assembly, monomer.

It is found in the cytoplasm. Its function is as follows. Can constrain negative DNA supercoils. May be involved in maintaining the integrity of the genome at high temperature. This chain is DNA-binding protein 7b, found in Acidianus hospitalis (strain W1).